Here is a 796-residue protein sequence, read N- to C-terminus: RNA cytosine-C(5)-methyltransferase NSUN2 (796 aa).

Residues 1-11 (MGRRARDRRRQ) show a composition bias toward basic residues. The disordered stretch occupies residues 1-36 (MGRRARDRRRQLQPQQRRERSGGGGGGGDDQAGWAG). A compositionally biased stretch (gly residues) spans 22 to 36 (GGGGGGGDDQAGWAG). S-adenosyl-L-methionine contacts are provided by residues 184–190 (CAAPGSK), aspartate 215, aspartate 242, and aspartate 268. Cysteine 321 (nucleophile) is an active-site residue. Disordered regions lie at residues 435–501 (WNKR…CGPP) and 707–796 (RKEG…NVKD). Composition is skewed to basic and acidic residues over residues 467 to 483 (ATEKPTLAEDEEPKKVQ), 708 to 721 (KEGESEGKTEEEVQ), and 733 to 746 (VEDKERDAVTKMEA). A compositionally biased stretch (polar residues) spans 774-783 (CSKNTNSHIN). The segment covering 784-796 (QESKDMNTNNVKD) has biased composition (basic and acidic residues).

This sequence belongs to the class I-like SAM-binding methyltransferase superfamily. RsmB/NOP family. TRM4 subfamily.

The protein resides in the nucleus. It localises to the nucleolus. The protein localises to the cytoplasm. Its subcellular location is the mitochondrion. It is found in the cytoskeleton. The protein resides in the spindle. It localises to the secreted. The protein localises to the extracellular exosome. It catalyses the reaction cytidine(48) in tRNA + S-adenosyl-L-methionine = 5-methylcytidine(48) in tRNA + S-adenosyl-L-homocysteine + H(+). The catalysed reaction is cytidine(49) in tRNA + S-adenosyl-L-methionine = 5-methylcytidine(49) in tRNA + S-adenosyl-L-homocysteine + H(+). The enzyme catalyses cytidine(50) in tRNA + S-adenosyl-L-methionine = 5-methylcytidine(50) in tRNA + S-adenosyl-L-homocysteine + H(+). It carries out the reaction cytidine(34) in tRNA precursor + S-adenosyl-L-methionine = 5-methylcytidine(34) in tRNA precursor + S-adenosyl-L-homocysteine + H(+). It catalyses the reaction a cytidine in mRNA + S-adenosyl-L-methionine = a 5-methylcytidine in mRNA + S-adenosyl-L-homocysteine + H(+). In terms of biological role, RNA cytosine C(5)-methyltransferase that methylates cytosine to 5-methylcytosine (m5C) in various RNAs, such as tRNAs, mRNAs and some long non-coding RNAs (lncRNAs). Involved in various processes, such as epidermal stem cell differentiation, testis differentiation and maternal to zygotic transition during early development: acts by increasing protein synthesis; cytosine C(5)-methylation promoting tRNA stability and preventing mRNA decay. Methylates cytosine to 5-methylcytosine (m5C) at positions 34 and 48 of intron-containing tRNA(Leu)(CAA) precursors, and at positions 48, 49 and 50 of tRNA(Gly)(GCC) precursors. tRNA methylation is required generation of RNA fragments derived from tRNAs (tRFs). Also mediates C(5)-methylation of mitochondrial tRNAs. Catalyzes cytosine C(5)-methylation of mRNAs, leading to stabilize them and prevent mRNA decay. Cytosine C(5)-methylation of mRNAs also regulates mRNA export. Also mediates cytosine C(5)-methylation of non-coding RNAs, such as vault RNAs (vtRNAs), promoting their processing into regulatory small RNAs. Required for proper spindle assembly and chromosome segregation, independently of its methyltransferase activity. The polypeptide is RNA cytosine-C(5)-methyltransferase NSUN2 (Gallus gallus (Chicken)).